A 295-amino-acid chain; its full sequence is MENKLNIVIITGMSGAGKTVAIQSFEDMGYFTVDNMPPNLIEKFVGLLNTPDNKIDKVALVVDMRSRAFFEDIQSIVTELTDNGSVNFKLLFLDANDTELVSRYKETRRSHPLAIDGRTLDGITKEREILADLKNLSEVVIDTSELTPRNLRARILQKFASSTESTFRIEVMSFGFKYGLPLDADLVFDVRFLPNPHYITELRDKNGTDKEVYDYVMEHPQSEEFYENLMKMLVPILPAYKKEGKSVLTIAFGCTGGQHRSVAFAERVSAALKDKWHLNVSHRDKDRRKETVNRS.

12-19 is a binding site for ATP; the sequence is GMSGAGKT. 63–66 contacts GTP; the sequence is DMRS.

Belongs to the RapZ-like family.

Functionally, displays ATPase and GTPase activities. This is Nucleotide-binding protein YjiE (yjiE) from Lactococcus lactis subsp. lactis (strain IL1403) (Streptococcus lactis).